Reading from the N-terminus, the 109-residue chain is UPF0060 membrane protein HEAR0108 (109 aa).

Transmembrane regions (helical) follow at residues 7–27, 33–53, 63–83, and 87–107; these read VALFVVTAIAEIVGCYLPYLW, SIWLLLPAALSLALFAWLLSL, AAYGGIYVAVALGWLWLVDGI, and NWDVAGVVFTFIGMGIIMFAP.

The protein belongs to the UPF0060 family.

It is found in the cell inner membrane. This chain is UPF0060 membrane protein HEAR0108, found in Herminiimonas arsenicoxydans.